Consider the following 350-residue polypeptide: Beta-hexosaminidase (350 aa).

Substrate contacts are provided by residues Asp-73, Arg-81, Arg-148, and 178–179 (KH). The active-site Proton donor/acceptor is the His-191. Asp-262 serves as the catalytic Nucleophile.

It belongs to the glycosyl hydrolase 3 family. NagZ subfamily.

Its subcellular location is the cytoplasm. It carries out the reaction Hydrolysis of terminal non-reducing N-acetyl-D-hexosamine residues in N-acetyl-beta-D-hexosaminides.. The protein operates within cell wall biogenesis; peptidoglycan recycling. Plays a role in peptidoglycan recycling by cleaving the terminal beta-1,4-linked N-acetylglucosamine (GlcNAc) from peptide-linked peptidoglycan fragments, giving rise to free GlcNAc, anhydro-N-acetylmuramic acid and anhydro-N-acetylmuramic acid-linked peptides. The protein is Beta-hexosaminidase of Bordetella avium (strain 197N).